Reading from the N-terminus, the 1413-residue chain is DNA-directed RNA polymerase subunit beta' (1413 aa).

Positions 72, 74, 87, and 90 each coordinate Zn(2+). Aspartate 463, aspartate 465, and aspartate 467 together coordinate Mg(2+). The Zn(2+) site is built by cysteine 811, cysteine 885, cysteine 892, and cysteine 895.

Belongs to the RNA polymerase beta' chain family. As to quaternary structure, the RNAP catalytic core consists of 2 alpha, 1 beta, 1 beta' and 1 omega subunit. When a sigma factor is associated with the core the holoenzyme is formed, which can initiate transcription. Mg(2+) serves as cofactor. Requires Zn(2+) as cofactor.

It catalyses the reaction RNA(n) + a ribonucleoside 5'-triphosphate = RNA(n+1) + diphosphate. Functionally, DNA-dependent RNA polymerase catalyzes the transcription of DNA into RNA using the four ribonucleoside triphosphates as substrates. This chain is DNA-directed RNA polymerase subunit beta', found in Ruegeria pomeroyi (strain ATCC 700808 / DSM 15171 / DSS-3) (Silicibacter pomeroyi).